Reading from the N-terminus, the 442-residue chain is Protein IQ-DOMAIN 33 (442 aa).

The IQ domain maps to 159-188 (EEDAAVIIQSAFRSYLAIRRSKEEEETFAK). The tract at residues 184-212 (ETFAKEESFSGEESQDNASMGTSLEAQTG) is disordered. Over residues 199–212 (DNASMGTSLEAQTG) the composition is skewed to polar residues. Residues 270 to 282 (RERALAYAFSQQL) form a calmodulin-binding region. The disordered stretch occupies residues 375-442 (EKSSFKPSIS…ETSHKLNSST (68 aa)). The segment covering 383-402 (ISKRKSVPSYKSQRKHHKLQ) has biased composition (basic residues). Residues 385–392 (KRKSVPSY) carry the Nuclear localization signal motif.

It belongs to the IQD family. In terms of assembly, binds to multiple calmodulin (CaM) in the presence of Ca(2+) and CaM-like proteins.

It is found in the nucleus. Its function is as follows. May be involved in cooperative interactions with calmodulins or calmodulin-like proteins. Recruits calmodulin proteins to microtubules, thus being a potential scaffold in cellular signaling and trafficking. May associate with nucleic acids and regulate gene expression at the transcriptional or post-transcriptional level. The chain is Protein IQ-DOMAIN 33 from Arabidopsis thaliana (Mouse-ear cress).